The following is an 829-amino-acid chain: Transmembrane protease serine 7 (829 aa).

Residues 1–62 (MDKEKSDPSC…RAPFWNVQNK (62 aa)) lie on the Cytoplasmic side of the membrane. The segment at 26 to 52 (SVPGKLPGRRPPRKPIGKPRPRKQPKK) is disordered. Over residues 32–52 (PGRRPPRKPIGKPRPRKQPKK) the composition is skewed to basic residues. Residues 63–83 (IILFTVFLFILAVTAWTLLWL) form a helical; Signal-anchor for type II membrane protein membrane-spanning segment. The Extracellular portion of the chain corresponds to 84–829 (YISKTESKDA…WIHKYVPSLL (746 aa)). Residues 92 to 220 (DAFYFVGMFR…DSVVLNAGLR (129 aa)) form the SEA domain. 3 disulfide bridges follow: C233/C259, C285/C308, and C351/C382. CUB domains follow at residues 233 to 346 (CSRY…FEVI) and 351 to 467 (CEST…YNIS). Residues N401 and N465 are each glycosylated (N-linked (GlcNAc...) asparagine). 3 LDL-receptor class A domains span residues 469–505 (PCPAGSFRCSSGLCVPQAQRCDGVNDCFDESDELFCV), 503–540 (FCVTVKPACNSSSFRQHGPLVCDGFRDCEDGQDEQNCT), and 544–581 (PCTSRTFKCGNDICFRKQNAQCDGIVDCPDGSDEEGCG). Cystine bridges form between C470–C482, C477–C495, C489–C504, C511–C530, C524–C539, C545–C557, C552–C571, C565–C580, and C617–C633. Positions 592–826 (IVGGSDSQEG…FVPWIHKYVP (235 aa)) constitute a Peptidase S1 domain. Active-site charge relay system residues include H632 and D680. 3 disulfides stabilise this stretch: C716-C782, C748-C761, and C772-C802. S776 acts as the Charge relay system in catalysis.

It belongs to the peptidase S1 family. As to quaternary structure, forms a heterodimer with SERPINA5. Post-translationally, N-glycosylated. As to expression, expressed in brain, eye, testis, skin, epididymis and salivary gland with lower levels in heart, skeletal muscle, thymus, ovary, prostate and uterus.

It localises to the cell membrane. Functionally, serine protease which preferentially hydrolyzes peptides with Arg at the P1 position. The polypeptide is Transmembrane protease serine 7 (Tmprss7) (Mus musculus (Mouse)).